The chain runs to 166 residues: MSNNDQKRDEGYIEKLVQVNRVAKTVKGGRIFTFTALTVVGDGKGRVGFGRGKSREVPAAIQKAMEAARRNMIQVDLNGTTLQYAMKSAHGASKVYMQPASEGTGIIAGGAMRAVLEVAGVQNVLAKCYGSTNPVNVVHATFKGLKAMQSPESIAAKRGLTVKEIF.

In terms of domain architecture, S5 DRBM spans tyrosine 12 to valine 75.

The protein belongs to the universal ribosomal protein uS5 family. As to quaternary structure, part of the 30S ribosomal subunit. Contacts proteins S4 and S8.

Its function is as follows. With S4 and S12 plays an important role in translational accuracy. In terms of biological role, located at the back of the 30S subunit body where it stabilizes the conformation of the head with respect to the body. The chain is Small ribosomal subunit protein uS5 from Pseudomonas fluorescens (strain SBW25).